Consider the following 533-residue polypeptide: MSKDYQSLAKLSPFELKDELIKIASSDGNRLMLNAGRGNPNFLATTPRRAFFRLGLFAAAESELSYSYMTTVGVGGLAKIDGIEGRFERYIAENRDQEGVRFLGKSLSYVRDQLGLDPAAFLHEMVDGILGCNYPVPPRMLNISEKIVRQYIIREMGADAIPSESVNLFAVEGGTAAMAYIFESLKLNGLLKAGDKVAIGMPVFTPYIEIPELAQYALEEVAINADPSLNWQYPDSELDKLKDPAIKIFFCVNPSNPPSVKMDQRSLERVRNIVAEHRPDLMILTDDVYGTFADDFQSLFAICPENTLLVYSFSKYFGATGWRLGVVAAHQQNVFDLALDKLQESEKVALDHRYRSLLPDVRSLKFIDRLVADSRAVALNHTAGLSTPQQVQMALFSLFALMDEADEYKHTLKQLIRRRETTLYRELGMPPLRDENAVDYYTLIDLQDVTAKLYGEAFSEWAVKQSSTGDMLFRIADETGIVLLPGRGFGSNRPSGRASLANLNEYEYAAIGRALRKMADELYAEYSGQAQNL.

L-aspartate-binding residues include G115 and N256. K315 bears the N6-(pyridoxal phosphate)lysine mark. Position 497 (R497) interacts with L-aspartate.

It belongs to the class-I pyridoxal-phosphate-dependent aminotransferase family. As to quaternary structure, homododecamer. Pyridoxal 5'-phosphate serves as cofactor.

The catalysed reaction is L-aspartate + H(+) = L-alanine + CO2. It catalyses the reaction L-aspartate + 2-oxoglutarate = oxaloacetate + L-glutamate. Functionally, bifunctional enzyme that has both L-aspartate decarboxylase and transaminase activity. The protein is Bifunctional aspartate aminotransferase and L-aspartate beta-decarboxylase of Comamonas testosteroni (Pseudomonas testosteroni).